We begin with the raw amino-acid sequence, 63 residues long: Large ribosomal subunit protein uL30 (63 aa).

Belongs to the universal ribosomal protein uL30 family. In terms of assembly, part of the 50S ribosomal subunit.

This Granulibacter bethesdensis (strain ATCC BAA-1260 / CGDNIH1) protein is Large ribosomal subunit protein uL30.